Consider the following 383-residue polypeptide: UPF0425 pyridoxal phosphate-dependent protein Msp_0916 (383 aa).

Lys-207 carries the post-translational modification N6-(pyridoxal phosphate)lysine.

Belongs to the UPF0425 family. Requires pyridoxal 5'-phosphate as cofactor.

The sequence is that of UPF0425 pyridoxal phosphate-dependent protein Msp_0916 from Methanosphaera stadtmanae (strain ATCC 43021 / DSM 3091 / JCM 11832 / MCB-3).